Reading from the N-terminus, the 700-residue chain is Transketolase (700 aa).

Residue T2 is modified to N-acetylthreonine. H45 serves as a coordination point for substrate. Residues T48, H85, 133–135 (GPL), and L135 contribute to the thiamine diphosphate site. Residue D177 coordinates Mg(2+). The thiamine diphosphate site is built by G178 and N207. Positions 207 and 209 each coordinate Mg(2+). H283, R378, and S405 together coordinate substrate. H283 is a binding site for thiamine diphosphate. The Proton donor role is filled by E441. F467 lines the thiamine diphosphate pocket. Residues H491, D499, and R552 each contribute to the substrate site.

The protein belongs to the transketolase family. In terms of assembly, homodimer. Mg(2+) is required as a cofactor. Requires Ca(2+) as cofactor. It depends on Mn(2+) as a cofactor. Co(2+) serves as cofactor. The cofactor is thiamine diphosphate.

The catalysed reaction is D-sedoheptulose 7-phosphate + D-glyceraldehyde 3-phosphate = aldehydo-D-ribose 5-phosphate + D-xylulose 5-phosphate. In terms of biological role, catalyzes the reversible transfer of a two-carbon ketol group from sedoheptulose-7-phosphate to glyceraldehyde-3-phosphate, producing xylulose-5-phosphate and ribose-5-phosphate. Catalyzes the transfer of a two-carbon ketol group from a ketose donor to an aldose acceptor, via a covalent intermediate with the cofactor thiamine pyrophosphate. The chain is Transketolase (tkt) from Mycobacterium tuberculosis (strain ATCC 25618 / H37Rv).